The following is a 387-amino-acid chain: 2-deoxystreptamine glucosyltransferase (387 aa).

This sequence belongs to the glycosyltransferase group 1 family.

It catalyses the reaction 2-deoxystreptamine + UDP-N-acetyl-alpha-D-glucosamine = 2'-N-acetylparomamine + UDP + H(+). It carries out the reaction 2-deoxystreptamine + UDP-alpha-D-glucose = 2'-deamino-2'-hydroxyparomamine + UDP + H(+). Its pathway is antibiotic biosynthesis; kanamycin biosynthesis. Its function is as follows. Glycosyltransferase involved in the biosynthesis of kanamycin by mediating conversion of 2-deoxystreptamine (2-DOS) to 2'-N-acetylparomamine using UDP-alpha-D-glucose as sugar donor. Can also accept UDP-alpha-D-glucosamine, but with a much lower activity compared to UDP-alpha-D-glucose. This is 2-deoxystreptamine glucosyltransferase (kanF) from Streptomyces kanamyceticus.